The primary structure comprises 105 residues: Pyrimidine/purine nucleoside phosphorylase (105 aa).

This sequence belongs to the nucleoside phosphorylase PpnP family.

The enzyme catalyses a purine D-ribonucleoside + phosphate = a purine nucleobase + alpha-D-ribose 1-phosphate. It carries out the reaction adenosine + phosphate = alpha-D-ribose 1-phosphate + adenine. It catalyses the reaction cytidine + phosphate = cytosine + alpha-D-ribose 1-phosphate. The catalysed reaction is guanosine + phosphate = alpha-D-ribose 1-phosphate + guanine. The enzyme catalyses inosine + phosphate = alpha-D-ribose 1-phosphate + hypoxanthine. It carries out the reaction thymidine + phosphate = 2-deoxy-alpha-D-ribose 1-phosphate + thymine. It catalyses the reaction uridine + phosphate = alpha-D-ribose 1-phosphate + uracil. The catalysed reaction is xanthosine + phosphate = alpha-D-ribose 1-phosphate + xanthine. In terms of biological role, catalyzes the phosphorolysis of diverse nucleosides, yielding D-ribose 1-phosphate and the respective free bases. Can use uridine, adenosine, guanosine, cytidine, thymidine, inosine and xanthosine as substrates. Also catalyzes the reverse reactions. The polypeptide is Pyrimidine/purine nucleoside phosphorylase (Anaeromyxobacter sp. (strain Fw109-5)).